The chain runs to 152 residues: Small ribosomal subunit protein uS13 (152 aa).

Belongs to the universal ribosomal protein uS13 family.

Its subcellular location is the cytoplasm. Functionally, located at the top of the head of the 40S subunit, it contacts several helices of the 18S rRNA. The polypeptide is Small ribosomal subunit protein uS13 (RPS18) (Argopecten irradians (Bay scallop)).